The sequence spans 205 residues: Probable 3'-5' exonuclease KapD (205 aa).

One can recognise an Exonuclease domain in the interval 6–173 (LLIIDFEFTM…DDALTAYKLF (168 aa)). Asp-10, Glu-12, and Asp-104 together coordinate Mg(2+). Catalysis depends on Glu-12, which acts as the Proton acceptor. Glu-12 contributes to the AMP binding site. His-160 serves as the catalytic Proton acceptor. His-160 is a binding site for AMP. Residue Asp-165 coordinates Mg(2+).

Mg(2+) serves as cofactor.

Its function is as follows. Specifically inhibits the KinA pathway to sporulation. In Bacillus subtilis (strain 168), this protein is Probable 3'-5' exonuclease KapD (kapD).